Here is a 476-residue protein sequence, read N- to C-terminus: Rab-3A-interacting protein (476 aa).

Serine 163 and serine 165 each carry phosphoserine; by PKB/AKT1. Residues serine 165–leucine 260 adopt a coiled-coil conformation. Positions serine 262–histidine 297 are disordered. Phosphoserine is present on residues serine 263, serine 266, serine 288, and serine 296. Polar residues predominate over residues lysine 287 to histidine 297. The tract at residues threonine 435–leucine 444 is important for RAB11A binding.

It belongs to the SEC2 family. Homodimer. Interacts with the N-terminal region of SSX2. Interacts with the GDP-bound forms of RAB8A and RAB8B. The interaction with RAB8A is prevented by phosphorylation of RAB8A at 'Thr-72'. Interacts with the GDP-bound forms of RAB3A and RAB3D. Interacts with DCDC1. Interacts (via the N-terminal region) with TRAPPC14; this interaction mediates RAB3IP association with the TRAPP II complex. Forms a heterotetramer with RAB11A where RAB3IP homodimer binds two RAB11A subunits. Forms a complex with RAB11A and RAB11FIP3, probably a heterohexamer with two of each protein subunit, where Rabin8/RAB3IP and RAB11FIP3 simultaneously bind to RAB11A; the complex promotes preciliary trafficking. Forms a complex containing RAB11A, ASAP1, RAB3IP, RAP11FIP3 and ARF4; the complex promotes preciliary trafficking; the complex binds to RHO in photoreceptor cells and promotes RHO ciliary transport. Phosphorylated by AKT1; the phosphorylation alters its GEF activity. Expressed in brain, kidney, heart, pancreas and placenta. Not detected in skeletal muscle or liver.

Its subcellular location is the cytoplasm. The protein resides in the nucleus. The protein localises to the cytoskeleton. It is found in the cell projection. It localises to the lamellipodium. Its subcellular location is the vesicle. The protein resides in the microtubule organizing center. The protein localises to the centrosome. Its activity is regulated as follows. Phosphorylation by ATK1 alters its GEF activity. Complex formation with RAB11A and RAB11FIP3 and ciliogenesis function are competitively inhibited by RAB11A-WDR44 interaction. Guanine nucleotide exchange factor (GEF) which may activate RAB8A and RAB8B. Promotes the exchange of GDP to GTP, converting inactive GDP-bound Rab proteins into their active GTP-bound form. Mediates the release of GDP from RAB8A and RAB8B but not from RAB3A or RAB5. Modulates actin organization and promotes polarized transport of RAB8A-specific vesicles to the cell surface. Together with RAB11A, RAB8A, the exocyst complex, PARD3, PRKCI, ANXA2, CDC42 and DNMBP promotes transcytosis of PODXL to the apical membrane initiation sites (AMIS), apical surface formation and lumenogenesis. Part of the ciliary targeting complex containing Rab11, ASAP1, RAB3IP and RAB11FIP3 and ARF4 that promotes RAB3IP preciliary vesicle trafficking to mother centriole and ciliogenesis initiation. The protein is Rab-3A-interacting protein of Homo sapiens (Human).